Consider the following 244-residue polypeptide: 7-cyano-7-deazaguanine synthase (244 aa).

14–24 (FSGGQDSATCV) contacts ATP. The Zn(2+) site is built by Cys202, Cys217, Cys220, and Cys223.

Belongs to the QueC family. Zn(2+) is required as a cofactor.

It catalyses the reaction 7-carboxy-7-deazaguanine + NH4(+) + ATP = 7-cyano-7-deazaguanine + ADP + phosphate + H2O + H(+). It participates in purine metabolism; 7-cyano-7-deazaguanine biosynthesis. Its function is as follows. Catalyzes the ATP-dependent conversion of 7-carboxy-7-deazaguanine (CDG) to 7-cyano-7-deazaguanine (preQ(0)). In Burkholderia thailandensis (strain ATCC 700388 / DSM 13276 / CCUG 48851 / CIP 106301 / E264), this protein is 7-cyano-7-deazaguanine synthase.